A 65-amino-acid polypeptide reads, in one-letter code: Beta-toxin Am IT (65 aa).

The residue at position 1 (E1) is a Pyrrolidone carboxylic acid (Glu); partial. The 64-residue stretch at 1 to 64 (EHGYLLDKYT…LWNYKTNKCK (64 aa)) folds into the LCN-type CS-alpha/beta domain. 4 disulfide bridges follow: C12–C63, C16–C38, C23–C45, and C27–C47. The residue at position 65 (S65) is a Serine amide.

The protein belongs to the long (4 C-C) scorpion toxin superfamily. Sodium channel inhibitor family. As to expression, expressed by the venom gland.

The protein localises to the secreted. Has a toxic effect on insects and mammals. On German cockroach larvae, it provokes contraction, paralysis and lethality. Intracerebroventricular injection into mice causes severe neurotoxic symptoms. It fully competes with the binding of the iodinated Css4 (AC P60266) on rat brain synaptosomes, with moderate affinity and in a concentration-dependent manner (EC(50)=25 nM). It may act on both site 3 and site 4 of voltage-gated sodium channels. The sequence is that of Beta-toxin Am IT from Androctonus mauritanicus mauritanicus (Scorpion).